Reading from the N-terminus, the 520-residue chain is Glucose-1-phosphate adenylyltransferase small subunit, chloroplastic (520 aa).

The N-terminal 71 residues, 1–71 (MATMAAIGSL…RTPSIVSPKA (71 aa)), are a transit peptide targeting the chloroplast. The interval 1-81 (MATMAAIGSL…VSDSQNSQTC (81 aa)) is disordered. The segment covering 14-27 (SSSSNHTRRLSSSS) has biased composition (low complexity). The segment covering 28 to 51 (QRKTLSFSSSSLTGEKLNPTQEII) has biased composition (polar residues).

The protein belongs to the bacterial/plant glucose-1-phosphate adenylyltransferase family. In terms of assembly, heterotetramer. In terms of tissue distribution, leaves.

It localises to the plastid. It is found in the chloroplast. It carries out the reaction alpha-D-glucose 1-phosphate + ATP + H(+) = ADP-alpha-D-glucose + diphosphate. It participates in glycan biosynthesis; starch biosynthesis. Its activity is regulated as follows. Activated by 3'phosphoglycerate, inhibited by orthophosphate. Allosteric regulation. In terms of biological role, this protein plays a role in synthesis of starch. It catalyzes the synthesis of the activated glycosyl donor, ADP-glucose from Glc-1-P and ATP. In Brassica napus (Rape), this protein is Glucose-1-phosphate adenylyltransferase small subunit, chloroplastic (AGPS1).